The following is a 163-amino-acid chain: Myosin light chain 2 (163 aa).

2 EF-hand domains span residues 15–50 and 92–127; these read DYIN…LGKT and PERE…AGFE. Asp-28, Asp-30, Asp-32, and Asp-39 together coordinate Ca(2+).

As to quaternary structure, interacts with the IQ domain of MYO1.

The protein resides in the bud neck. Functionally, regulatory light chain for the class II conventional myosin MYO1. May play a role in the disassembly of the MYO1 ring at the bud neck at the end of its contraction during cytokinesis. This chain is Myosin light chain 2 (MLC2), found in Saccharomyces cerevisiae (strain ATCC 204508 / S288c) (Baker's yeast).